The chain runs to 226 residues: Guanylate kinase (226 aa).

Residues Gly13–Arg193 enclose the Guanylate kinase-like domain. Ala20–Thr27 provides a ligand contact to ATP.

Belongs to the guanylate kinase family.

The protein localises to the cytoplasm. The enzyme catalyses GMP + ATP = GDP + ADP. In terms of biological role, essential for recycling GMP and indirectly, cGMP. This is Guanylate kinase from Anaeromyxobacter dehalogenans (strain 2CP-C).